Consider the following 131-residue polypeptide: Small ribosomal subunit protein uS8 (131 aa).

This sequence belongs to the universal ribosomal protein uS8 family. Part of the 30S ribosomal subunit. Contacts proteins S5 and S12.

Functionally, one of the primary rRNA binding proteins, it binds directly to 16S rRNA central domain where it helps coordinate assembly of the platform of the 30S subunit. This Geobacillus stearothermophilus (Bacillus stearothermophilus) protein is Small ribosomal subunit protein uS8.